The following is a 366-amino-acid chain: NADH-quinone oxidoreductase subunit H (366 aa).

Helical transmembrane passes span 27 to 47 (LLLI…LTFA), 99 to 119 (FLFL…WAVV), 134 to 154 (LLYI…AGWA), 168 to 188 (AAQV…VLMM), 206 to 226 (FLNW…ISGV), 268 to 288 (ILVA…PVDI), 294 to 314 (IPGM…FLWF), and 329 to 349 (LGWK…GMVM).

This sequence belongs to the complex I subunit 1 family. NDH-1 is composed of 14 different subunits. Subunits NuoA, H, J, K, L, M, N constitute the membrane sector of the complex.

The protein localises to the cell inner membrane. It catalyses the reaction a quinone + NADH + 5 H(+)(in) = a quinol + NAD(+) + 4 H(+)(out). NDH-1 shuttles electrons from NADH, via FMN and iron-sulfur (Fe-S) centers, to quinones in the respiratory chain. The immediate electron acceptor for the enzyme in this species is believed to be ubiquinone. Couples the redox reaction to proton translocation (for every two electrons transferred, four hydrogen ions are translocated across the cytoplasmic membrane), and thus conserves the redox energy in a proton gradient. This subunit may bind ubiquinone. In Nitrosomonas europaea (strain ATCC 19718 / CIP 103999 / KCTC 2705 / NBRC 14298), this protein is NADH-quinone oxidoreductase subunit H.